Here is a 603-residue protein sequence, read N- to C-terminus: Trihelix transcription factor DF1 (603 aa).

A Myb-like 1 domain is found at 60–118 (NRWPRQETLALLKIRSDMGIAFRDASVKGPLWEEVSRKMAEHGYIRNAKKCKEKFENVY). Disordered regions lie at residues 149–201 (QSTT…SSIP), 220–249 (LSDNSTSSSSSYSTSSDMEMGGGTATTRKK), 333–408 (KQPN…SSSR), and 532–603 (QWPP…TNNL). Low complexity-rich tracts occupy residues 168 to 178 (NNNNNNNNNNN), 189 to 198 (TTVMPTLPSS), 221 to 236 (SDNSTSSSSSYSTSSD), and 344 to 362 (PQQVRPSMQLNNNNQQQPP). Residues 363-376 (QRSPPPQPPAPLPQ) are compositionally biased toward pro residues. Polar residues predominate over residues 381–408 (VVSTLDTTKTDNGGDQNMTPAASASSSR). In terms of domain architecture, Myb-like 2 spans 401–465 (AASASSSRWP…RCKEKWENIN (65 aa)). The segment covering 532–555 (QWPPAVTTATTTPAAAQPDQQSQP) has biased composition (low complexity). Positions 559 to 586 (NFDDEEGTDEEYDDEDEEEENEEEEGGE) are enriched in acidic residues. The segment covering 593–603 (NNNNNKTTNNL) has biased composition (low complexity).

Its subcellular location is the nucleus. Its function is as follows. Transcription repressor that negatively regulates root hair growth by directly binding RSL4 promoter and repressing RSL4 expression. Required for the synthesis of seed coat mucilage. The protein is Trihelix transcription factor DF1 of Arabidopsis thaliana (Mouse-ear cress).